The following is a 200-amino-acid chain: Potassium-transporting ATPase KdpC subunit (200 aa).

A helical transmembrane segment spans residues isoleucine 13–glycine 33.

The protein belongs to the KdpC family. As to quaternary structure, the system is composed of three essential subunits: KdpA, KdpB and KdpC.

The protein localises to the cell membrane. Part of the high-affinity ATP-driven potassium transport (or Kdp) system, which catalyzes the hydrolysis of ATP coupled with the electrogenic transport of potassium into the cytoplasm. This subunit acts as a catalytic chaperone that increases the ATP-binding affinity of the ATP-hydrolyzing subunit KdpB by the formation of a transient KdpB/KdpC/ATP ternary complex. The sequence is that of Potassium-transporting ATPase KdpC subunit from Anabaena sp. (strain L31).